Reading from the N-terminus, the 59-residue chain is Kunitz-type serine protease inhibitor dendrotoxin E (59 aa).

Residues 7–57 (CKLPAEPGPCKASIPAFYYNWAAKKCQLFHYGGCKGNANRFSTIEKCRHAC) enclose the BPTI/Kunitz inhibitor domain. 3 cysteine pairs are disulfide-bonded: Cys-7-Cys-57, Cys-16-Cys-40, and Cys-32-Cys-53.

The protein belongs to the venom Kunitz-type family. As to expression, expressed by the venom gland.

The protein localises to the secreted. Its function is as follows. Serine protease inhibitor that inhibits trypsin. May also inhibit voltage-gated potassium channels (Kv). Binds transition metal ions such as copper and cobalt. This chain is Kunitz-type serine protease inhibitor dendrotoxin E, found in Dendroaspis polylepis polylepis (Black mamba).